The following is a 238-amino-acid chain: uncharacterized protein (238 aa).

3 helical membrane passes run 75-95 (YAIF…HNFY), 116-136 (IVLI…FSLI), and 172-192 (IQGL…LEVI). Positions 200–238 (DVEMSSMRGQAITTEPASDNTMAEETDCNTSKDVESGSN) are disordered. A compositionally biased stretch (polar residues) spans 206 to 220 (MRGQAITTEPASDNT). Over residues 229 to 238 (TSKDVESGSN) the composition is skewed to basic and acidic residues.

It localises to the membrane. This is an uncharacterized protein from Schizosaccharomyces pombe (strain 972 / ATCC 24843) (Fission yeast).